Reading from the N-terminus, the 435-residue chain is Cell adhesion molecule 2 (435 aa).

An N-terminal signal peptide occupies residues Met-1–Gly-24. At Gln-25–His-367 the chain is on the extracellular side. Residues Pro-27 to Thr-119 form the Ig-like V-type domain. Residues Asn-31 and Asn-51 are each glycosylated (N-linked (GlcNAc...) asparagine). 3 disulfide bridges follow: Cys-44-Cys-104, Cys-146-Cys-203, and Cys-248-Cys-296. Ig-like C2-type domains are found at residues Pro-127–Gln-219 and Pro-227–Ile-312. Asn-291 carries N-linked (GlcNAc...) asparagine glycosylation. Positions Ser-337 to Ser-351 are enriched in low complexity. Positions Ser-337–Ala-360 are disordered. The helical transmembrane segment at Ala-368 to Leu-388 threads the bilayer. The Cytoplasmic portion of the chain corresponds to Gly-389 to Ile-435. Phosphoserine is present on Ser-423.

This sequence belongs to the nectin family. Glycosylation at Asn-51 reduces adhesive binding.

Its subcellular location is the cell membrane. The protein localises to the synapse. It localises to the cell projection. It is found in the axon. Functionally, adhesion molecule that engages in homo- and heterophilic interactions with the other nectin-like family members, leading to cell aggregation. Important for synapse organization, providing regulated trans-synaptic adhesion. Preferentially binds to oligodendrocytes. The sequence is that of Cell adhesion molecule 2 (Cadm2) from Mus musculus (Mouse).